The following is an 87-amino-acid chain: NADH-ubiquinone oxidoreductase chain 4L (87 aa).

The next 2 helical transmembrane spans lie at 22–42 and 49–69; these read FLSF…FIIG and LFLI…SLLV.

This sequence belongs to the complex I subunit 4L family.

The protein localises to the mitochondrion membrane. It catalyses the reaction a ubiquinone + NADH + 5 H(+)(in) = a ubiquinol + NAD(+) + 4 H(+)(out). Its function is as follows. Core subunit of the mitochondrial membrane respiratory chain NADH dehydrogenase (Complex I) that is believed to belong to the minimal assembly required for catalysis. Complex I functions in the transfer of electrons from NADH to the respiratory chain. The immediate electron acceptor for the enzyme is believed to be ubiquinone. This chain is NADH-ubiquinone oxidoreductase chain 4L (ND4L), found in Apis mellifera ligustica (Common honeybee).